Here is a 183-residue protein sequence, read N- to C-terminus: MTEYKLVVVGAGGVGKSALTIQLIQNHFVDEYDPTIEDSYRKQVVIDGETCLLDILDTAGQEEYSAMRDQYMRTGEGFLCVFAINNTKSFEDIHHYREQIKRVKDSEDVPMVLVGNKCDLPSRSVDTKQAQDLARSYGIPFIETSAKTRQRVEDAFYTLVREIRQYRLRKLSKEEETTQCIKL.

10–17 (GAGGVGKS) contacts GTP. Residues 32–40 (YDPTIEDSY) carry the Effector region motif. GTP contacts are provided by residues 57-61 (DTAGQ) and 116-119 (NKCD).

This sequence belongs to the small GTPase superfamily. Ras family.

The protein localises to the cell membrane. It carries out the reaction GTP + H2O = GDP + phosphate + H(+). Its activity is regulated as follows. Alternates between an inactive form bound to GDP and an active form bound to GTP. Activated by a guanine nucleotide-exchange factor (GEF) and inactivated by a GTPase-activating protein (GAP). Its function is as follows. Ras proteins bind GDP/GTP and possess intrinsic GTPase activity. The chain is Ras-like protein from Carassius auratus (Goldfish).